Reading from the N-terminus, the 94-residue chain is Ammonia regulation of amino acid uptake protein (94 aa).

2 consecutive repeats follow at residues His-48 to Gln-57 and His-58 to Gln-67.

Involved in ammonia regulation of the GAP1 permease. This is Ammonia regulation of amino acid uptake protein (AUA1) from Saccharomyces cerevisiae (strain ATCC 204508 / S288c) (Baker's yeast).